Consider the following 308-residue polypeptide: Oxygen-dependent coproporphyrinogen-III oxidase (308 aa).

A substrate-binding site is contributed by Ser-100. Residues His-104 and His-114 each contribute to the a divalent metal cation site. His-114 functions as the Proton donor in the catalytic mechanism. 116–118 (NFR) provides a ligand contact to substrate. A divalent metal cation-binding residues include His-153 and His-183. An important for dimerization region spans residues 248–283 (YVEFNLVFDRGTIFGLQSGGRTESILSSMPPMASWR). 266-268 (GGR) is a binding site for substrate.

This sequence belongs to the aerobic coproporphyrinogen-III oxidase family. In terms of assembly, homodimer. A divalent metal cation serves as cofactor.

The protein resides in the cytoplasm. It carries out the reaction coproporphyrinogen III + O2 + 2 H(+) = protoporphyrinogen IX + 2 CO2 + 2 H2O. It functions in the pathway porphyrin-containing compound metabolism; protoporphyrin-IX biosynthesis; protoporphyrinogen-IX from coproporphyrinogen-III (O2 route): step 1/1. In terms of biological role, involved in the heme biosynthesis. Catalyzes the aerobic oxidative decarboxylation of propionate groups of rings A and B of coproporphyrinogen-III to yield the vinyl groups in protoporphyrinogen-IX. The chain is Oxygen-dependent coproporphyrinogen-III oxidase from Francisella tularensis subsp. novicida (strain U112).